Reading from the N-terminus, the 262-residue chain is E3 ubiquitin-protein ligase NEURL3 (262 aa).

The region spanning 17 to 173 is the NHR domain; sequence ALRFHAEAKG…TTKAIELLDP (157 aa). An RING-type zinc finger spans residues 202–241; the sequence is CAICFYHAANTRLVPCGHTYFCRYCAWRVFSDTAKCPVCR.

In terms of assembly, (Microbial infection) Interacts with hepatitis C virus protein E1; this interaction prevents E1 interaction with E2 and subsequently inhibits viral infection.

Its subcellular location is the cytoplasm. The catalysed reaction is S-ubiquitinyl-[E2 ubiquitin-conjugating enzyme]-L-cysteine + [acceptor protein]-L-lysine = [E2 ubiquitin-conjugating enzyme]-L-cysteine + N(6)-ubiquitinyl-[acceptor protein]-L-lysine.. It participates in protein modification; protein ubiquitination. Functionally, E3 ubiquitin-protein ligase that plays a role in various biological processes such as lung development or innate immunity. Seems to utilize UBE2E1. Promotes innate antiviral response by catalyzing 'Lys-63'-linked ubiquitination of IRF7. Also inhibits hepatitis C virus assembly by directly binding to viral E1 envelope glycoprotein to disrupt its interaction with E2. Plays an essential role in TLR4-mediated activation of MAPK pathways by promoting 'Lys-48'-linked polyubiquitination of the phosphatase DUSP1/MKP1. The sequence is that of E3 ubiquitin-protein ligase NEURL3 (NEURL3) from Homo sapiens (Human).